Consider the following 281-residue polypeptide: 4-deoxy-L-threo-5-hexosulose-uronate ketol-isomerase (281 aa).

Zn(2+)-binding residues include H198, H200, E205, and H248.

It belongs to the KduI family. Zn(2+) serves as cofactor.

It catalyses the reaction 5-dehydro-4-deoxy-D-glucuronate = 3-deoxy-D-glycero-2,5-hexodiulosonate. The protein operates within glycan metabolism; pectin degradation; 2-dehydro-3-deoxy-D-gluconate from pectin: step 4/5. Functionally, catalyzes the isomerization of 5-dehydro-4-deoxy-D-glucuronate to 3-deoxy-D-glycero-2,5-hexodiulosonate. The polypeptide is 4-deoxy-L-threo-5-hexosulose-uronate ketol-isomerase (Lacticaseibacillus casei (strain BL23) (Lactobacillus casei)).